The following is an 82-amino-acid chain: Small ribosomal subunit protein bS16 (82 aa).

Belongs to the bacterial ribosomal protein bS16 family.

The protein is Small ribosomal subunit protein bS16 of Pectobacterium atrosepticum (strain SCRI 1043 / ATCC BAA-672) (Erwinia carotovora subsp. atroseptica).